The sequence spans 129 residues: UPF0325 protein SG1947 (129 aa).

This sequence belongs to the UPF0325 family.

In Sodalis glossinidius (strain morsitans), this protein is UPF0325 protein SG1947.